The chain runs to 200 residues: Small ribosomal subunit protein mS26 (200 aa).

Residues 1 to 27 constitute a mitochondrion transit peptide; it reads MLRALNRLAARPGGQPPTLLLLPVRGR. Lys159 carries the post-translational modification N6-acetyllysine.

It belongs to the mitochondrion-specific ribosomal protein mS26 family. As to quaternary structure, component of the mitochondrial ribosome small subunit (28S) which comprises a 12S rRNA and about 30 distinct proteins.

The protein localises to the mitochondrion. The protein is Small ribosomal subunit protein mS26 (Mrps26) of Rattus norvegicus (Rat).